The sequence spans 563 residues: MDTKTLIASEIAKVVPELEQDAIFNLLETPKNSDMGDLAFPAFSLAKVLRKAPQMIASELAEQIDESQFEKVVAVGPYINFFLDKAKISSQVLEQVITAGSDYAQQDEGQGRNVAIDMSSPNIAKPFSIGHLRSTVIGDSLAHIFAKMGYQPVKINHLGDWGKQFGMLIVAYKKWGDEAAVQAHPIDELLKLYVRINAEAETDPTIDEEAREWFRKLEDGDKEATELWQWFRDESLLEFNRLYDQLHVTFDSYNGEAFYNDKMDEVLDLLEAKNLLVESKGAQVVNLEKYGIEHPALIKKSDGATLYITRDLAAALYRKRTYDFAKSVYVVGNEQAAHFKQLKAVLKEMGYDWSDDMTHVAFGLVTKGGAKLSTRKGNVILLEPTVAEAINRAASQIEAKNPNLADKEAVAHAVGVGAIKFYDLKTDRMNGYDFDLEAMVSFEGETGPYVQYAHARIQSILRKADFTPSATTTYSLADAESWEIIKLIQDFPRIIKRTSDNFEPSIMAKFAINLAQSFNKYYAHTRILDDNSERDNRLALCYATATVLKEALRLLGVDAPNEM.

The 'HIGH' region signature appears at 121–131; it reads PNIAKPFSIGH.

The protein belongs to the class-I aminoacyl-tRNA synthetase family. In terms of assembly, monomer.

It localises to the cytoplasm. The catalysed reaction is tRNA(Arg) + L-arginine + ATP = L-arginyl-tRNA(Arg) + AMP + diphosphate. In Streptococcus pyogenes serotype M18 (strain MGAS8232), this protein is Arginine--tRNA ligase.